The sequence spans 228 residues: Orotidine 5'-phosphate decarboxylase (228 aa).

Substrate is bound by residues aspartate 20, lysine 42, 70 to 79 (DFKVADIPET), serine 127, 180 to 190 (PGVGAQGGDPG), glycine 202, and arginine 203. Lysine 72 (proton donor) is an active-site residue.

This sequence belongs to the OMP decarboxylase family. Type 1 subfamily. In terms of assembly, homodimer.

It catalyses the reaction orotidine 5'-phosphate + H(+) = UMP + CO2. It participates in pyrimidine metabolism; UMP biosynthesis via de novo pathway; UMP from orotate: step 2/2. Catalyzes the decarboxylation of orotidine 5'-monophosphate (OMP) to uridine 5'-monophosphate (UMP). In Methanothermobacter thermautotrophicus (strain ATCC 29096 / DSM 1053 / JCM 10044 / NBRC 100330 / Delta H) (Methanobacterium thermoautotrophicum), this protein is Orotidine 5'-phosphate decarboxylase (pyrF).